Consider the following 475-residue polypeptide: B-type cell cycle switch protein ccs52A (475 aa).

The interval 1-29 (MDGTGNRNPPPTSTVGDNSPPPEPSPESL) is disordered. The PEST motif signature appears at 7–28 (RNPPPTSTVGDNSPPPEPSPES). Phosphoserine occurs at positions 43 and 45. The C-box signature appears at 51-57 (DRFIPSR). The CSM motif signature appears at 80–91 (AYTTLLRTALFG). The residue at position 99 (T99) is a Phosphothreonine. 2 positions are modified to phosphoserine: S144 and S155. WD repeat units lie at residues 166–203 (QDDF…VTKL), 207–246 (GVDD…KIRS), 249–289 (GHRL…SKLS), 290–329 (GHKS…PVLK), 332–374 (EHTA…HLSC), 376–417 (DTGS…KLAT), and 420–459 (GHTY…KSQN). Position 454 is a phosphoserine (S454).

Belongs to the WD repeat CDC20/Fizzy family. In terms of tissue distribution, mostly expressed in nodules, and, to a lower extent, in root tips, stems, hypocotyls, leaves, flower buds and flowers.

It localises to the nucleus. Its pathway is protein modification; protein ubiquitination. In terms of biological role, component of the anaphase promoting complex/cyclosome (APC/C), a cell cycle-regulated E3 ubiquitin-protein ligase complex that controls progression through mitosis and the G1 phase of the cell cycle. Required to switch form cell proliferation to cell differentiation, endoreduplication and ploidy-dependent cell enlargement, including during nodulation, before nodule differentiation. Involved in root-knot nematode Meloidogyne incognita giant cells formation. The chain is B-type cell cycle switch protein ccs52A from Medicago truncatula (Barrel medic).